Consider the following 446-residue polypeptide: Mycosin-1 (446 aa).

The first 21 residues, 1-21 (MHRIFLITVALALLTASPASA), serve as a signal peptide directing secretion. The interval 24–43 (PPPIDPGALPPDVTGPDQPT) is disordered. Positions 64–387 (PWSNTYLGVA…AGVIDAVAAL (324 aa)) constitute a Peptidase S8 domain. Residues D90, H121, and S332 each act as charge relay system in the active site. Residues 419 to 439 (ITAVALVAVGLTLALGLGALA) traverse the membrane as a helical segment.

This sequence belongs to the peptidase S8 family.

The protein localises to the cell membrane. Its function is as follows. May play a dual role in regulation of ESX-1 secretion and virulence. Acts as a protease that cleaves EspB. Essential for ESX-1 function, required for early replication in macrophages and full virulence in mice. The sequence is that of Mycosin-1 from Mycobacterium tuberculosis (strain ATCC 25618 / H37Rv).